The primary structure comprises 45 residues: Large ribosomal subunit protein bL34 (45 aa).

Positions 1–20 (MSKRTYQPNKRKRLKTHGFR) are enriched in basic residues. Positions 1–45 (MSKRTYQPNKRKRLKTHGFRSRMSTASGRRIISCRRRKNRETLTA) are disordered.

It belongs to the bacterial ribosomal protein bL34 family.

This chain is Large ribosomal subunit protein bL34, found in Tropheryma whipplei (strain Twist) (Whipple's bacillus).